We begin with the raw amino-acid sequence, 1065 residues long: MESEGETAGKPMKNIVPQTCQICSDNVGKTVDGDRFVACDICSFPVCRPCYEYERKDGNQSCPQCKTRYKRLKGSPAIPGDKDEDGLADEGTVEFNYPQKEKISERMLGWHLTRGKGEEMGEPQYDKEVSHNHLPRLTSRQDTSGEFSAASPERLSVSSTIAGGKRLPYSSDVNQSPNRRIVDPVGLGNVAWKERVDGWKMKQEKNTGPVSTQAASERGGVDIDASTDILADEALLNDEARQPLSRKVSIPSSRINPYRMVIMLRLVILCLFLHYRITNPVPNAFALWLVSVICEIWFALSWILDQFPKWFPVNRETYLDRLALRYDREGEPSQLAAVDIFVSTVDPLKEPPLVTANTVLSILAVDYPVDKVSCYVSDDGAAMLSFESLAETSEFARKWVPFCKKYSIEPRAPEWYFAAKIDYLKDKVQTSFVKDRRAMKREYEEFKIRINALVSKALKCPEEGWVMQDGTPWPGNNTRDHPGMIQVFLGQNGGLDAEGNELPRLVYVSREKRPGFQHHKKAGAMNALVRVSAVLTNGPFILNLDCDHYINNSKALREAMCFLMDPNLGKQVCYVQFPQRFDGIDKNDRYANRNTVFFDINLRGLDGIQGPVYVGTGCVFNRTALYGYEPPIKVKHKKPSLLSKLCGGSRKKNSKAKKESDKKKSGRHTDSTVPVFNLDDIEEGVEGAGFDDEKALLMSQMSLEKRFGQSAVFVASTLMENGGVPPSATPENLLKEAIHVISCGYEDKSDWGMEIGWIYGSVTEDILTGFKMHARGWRSIYCMPKLPAFKGSAPINLSDRLNQVLRWALGSVEILFSRHCPIWYGYNGRLKFLERFAYVNTTIYPITSIPLLMYCTLPAVCLFTNQFIIPQISNIASIWFLSLFLSIFATGILEMRWSGVGIDEWWRNEQFWVIGGVSAHLFAVFQGILKVLAGIDTNFTVTSKASDEDGDFAELYLFKWTTLLIPPTTLLIVNLVGVVAGVSYAINSGYQSWGPLFGKLFFAFWVIVHLYPFLKGLMGRQNRTPTIVVVWSVLLASIFSLLWVRIDPFTSRVTGPDILECGINC.

Topologically, residues 1-260 are cytoplasmic; it reads MESEGETAGK…PSSRINPYRM (260 aa). A Phosphoserine modification is found at Ser3. The Zn(2+) site is built by Cys20, Cys23, Cys39, Cys42, Cys47, Cys50, Cys62, and Cys65. The RING-type; degenerate zinc finger occupies 20 to 66; the sequence is CQICSDNVGKTVDGDRFVACDICSFPVCRPCYEYERKDGNQSCPQCK. A phosphoserine mark is found at Ser151, Ser211, and Ser216. A helical transmembrane segment spans residues 261–281; sequence VIMLRLVILCLFLHYRITNPV. Over 282-283 the chain is Extracellular; the sequence is PN. The chain crosses the membrane as a helical span at residues 284–304; that stretch reads AFALWLVSVICEIWFALSWIL. The Cytoplasmic portion of the chain corresponds to 305-842; the sequence is DQFPKWFPVN…LERFAYVNTT (538 aa). Residues Ser343, Lys349, Glu350, and Asp379 each contribute to the UDP-alpha-D-glucose site. The active site involves Asp379. Positions 433–457 form a coiled coil; sequence VKDRRAMKREYEEFKIRINALVSKA. UDP-alpha-D-glucose is bound at residue Lys520. Mn(2+)-binding residues include Lys521 and Asp545. Positions 643–672 are disordered; that stretch reads SKLCGGSRKKNSKAKKESDKKKSGRHTDST. Residues 656 to 670 are compositionally biased toward basic and acidic residues; sequence AKKESDKKKSGRHTD. Residue Asp765 is part of the active site. The helical transmembrane segment at 843 to 863 threads the bilayer; the sequence is IYPITSIPLLMYCTLPAVCLF. At 864–874 the chain is on the extracellular side; that stretch reads TNQFIIPQISN. Residues 875-895 traverse the membrane as a helical segment; it reads IASIWFLSLFLSIFATGILEM. The Cytoplasmic portion of the chain corresponds to 896–910; the sequence is RWSGVGIDEWWRNEQ. The chain crosses the membrane as a helical span at residues 911-931; sequence FWVIGGVSAHLFAVFQGILKV. The Extracellular segment spans residues 932-961; it reads LAGIDTNFTVTSKASDEDGDFAELYLFKWT. Asn938 is a glycosylation site (N-linked (GlcNAc...) asparagine). Residues 962–982 form a helical membrane-spanning segment; that stretch reads TLLIPPTTLLIVNLVGVVAGV. Topologically, residues 983–993 are cytoplasmic; sequence SYAINSGYQSW. Residues 994–1014 form a helical membrane-spanning segment; sequence GPLFGKLFFAFWVIVHLYPFL. Residues 1015–1023 lie on the Extracellular side of the membrane; sequence KGLMGRQNR. A helical membrane pass occupies residues 1024–1044; the sequence is TPTIVVVWSVLLASIFSLLWV. Residues 1045–1065 are Cytoplasmic-facing; that stretch reads RIDPFTSRVTGPDILECGINC.

The protein belongs to the glycosyltransferase 2 family. Plant cellulose synthase subfamily. Homodimer. Interacts with CESA1 and CESA6. Interacts with STL1 and STL2, but not with GOT1. Binds to CSI1 and CSI3. Interacts with PAT24/TIP1. It depends on Zn(2+) as a cofactor. Mn(2+) is required as a cofactor. Post-translationally, palmitoylated, in part by PAT24/TIP1. Expressed in young plants, flowers and roots, and to a lower extent in leaves and stems. Localized in all cells except meristematic cells. Accumulates particularly in root caps, root hairs, epidermal layer, midveins of leaves and anthers. Not present in old tissues.

It localises to the cell membrane. It is found in the golgi apparatus membrane. The catalysed reaction is [(1-&gt;4)-beta-D-glucosyl](n) + UDP-alpha-D-glucose = [(1-&gt;4)-beta-D-glucosyl](n+1) + UDP + H(+). The protein operates within glycan metabolism; plant cellulose biosynthesis. Catalytic subunit of cellulose synthase terminal complexes ('rosettes'), required for beta-1,4-glucan microfibril crystallization, a major mechanism of the cell wall formation. Involved in the primary cell wall formation, especially in roots. In Arabidopsis thaliana (Mouse-ear cress), this protein is Cellulose synthase A catalytic subunit 3 [UDP-forming].